Here is a 23-residue protein sequence, read N- to C-terminus: Superoxide dismutase [Mn], mitochondrial (23 aa).

The protein belongs to the iron/manganese superoxide dismutase family. In terms of assembly, homotetramer. Mn(2+) serves as cofactor.

It localises to the mitochondrion matrix. It catalyses the reaction 2 superoxide + 2 H(+) = H2O2 + O2. In terms of biological role, destroys superoxide anion radicals which are normally produced within the cells and which are toxic to biological systems. This chain is Superoxide dismutase [Mn], mitochondrial, found in Aquarana catesbeiana (American bullfrog).